Here is a 397-residue protein sequence, read N- to C-terminus: ATP-dependent RNA helicase RhlB (397 aa).

The short motif at 9-37 is the Q motif element; the sequence is TRFHDFNLAPSLMHAIHDLGFPYCTPIQA. The 181-residue stretch at 40 to 220 folds into the Helicase ATP-binding domain; the sequence is LGFTLRGQDA…KQWTVDPAIV (181 aa). Residue 53-60 participates in ATP binding; sequence AQTGTGKT. Positions 166–169 match the DEAD box motif; it reads DEAD. A Helicase C-terminal domain is found at 243 to 393; that stretch reads DKYKLLYNLV…MPPAELLKPV (151 aa).

Belongs to the DEAD box helicase family. RhlB subfamily. As to quaternary structure, component of the RNA degradosome, which is a multiprotein complex involved in RNA processing and mRNA degradation.

It localises to the cytoplasm. It catalyses the reaction ATP + H2O = ADP + phosphate + H(+). Its function is as follows. DEAD-box RNA helicase involved in RNA degradation. Has RNA-dependent ATPase activity and unwinds double-stranded RNA. This chain is ATP-dependent RNA helicase RhlB, found in Pseudomonas aeruginosa (strain UCBPP-PA14).